Consider the following 305-residue polypeptide: tRNA pseudouridine synthase B (305 aa).

D41 functions as the Nucleophile in the catalytic mechanism.

Belongs to the pseudouridine synthase TruB family. Type 1 subfamily.

The enzyme catalyses uridine(55) in tRNA = pseudouridine(55) in tRNA. Its function is as follows. Responsible for synthesis of pseudouridine from uracil-55 in the psi GC loop of transfer RNAs. The sequence is that of tRNA pseudouridine synthase B from Prochlorococcus marinus subsp. pastoris (strain CCMP1986 / NIES-2087 / MED4).